Here is a 138-residue protein sequence, read N- to C-terminus: Histone H2AX (138 aa).

Positions 1–23 (MSTTGKGGKAKGKTASSKQVSRS) are disordered. The residue at position 2 (Ser2) is an N-acetylserine. N6-acetyllysine is present on residues Lys6, Lys9, Lys11, Lys13, and Lys18. A Phosphoserine modification is found at Ser123. A Glycyl lysine isopeptide (Lys-Gly) (interchain with G-Cter in ubiquitin) cross-link involves residue Lys124. Residues Ser125, Ser130, and Ser135 each carry the phosphoserine modification. The [ST]-Q motif signature appears at 135–136 (SQ).

Belongs to the histone H2A family. The nucleosome is a histone octamer containing two molecules each of H2A, H2B, H3 and H4 assembled in one H3-H4 heterotetramer and two H2A-H2B heterodimers. The octamer wraps approximately 147 bp of DNA. Monoubiquitination of Lys-124 gives a specific tag for epigenetic transcriptional repression. Post-translationally, phosphorylated to form H2AX134ph (gamma-H2AX) in response to DNA double-strand breaks (DSBs) generated by exogenous genotoxic agents in both the mitotic MIC and the amitotic MAC. Gamma-H2AX is also found when programmed DNA rearrangements occur, namely homologous recombination in the MIC during prophase of meiosis, and chromosome fragmentation and DNA elimination in developing MACs. Gamma-H2AX is important to recover from exogenous DNA damage and to repair breaks associated with normal micronuclear meiosis and mitosis and macronuclear amitotic division. In terms of processing, acetylation occurs almost exclusively in the MAC.

The protein localises to the nucleus. The protein resides in the chromosome. Functionally, core component of nucleosome which plays a central role in DNA double strand break (DSB) repair. Nucleosomes wrap and compact DNA into chromatin, limiting DNA accessibility to the cellular machineries which require DNA as a template. Histones thereby play a central role in transcription regulation, DNA repair, DNA replication and chromosomal stability. DNA accessibility is regulated via a complex set of post-translational modifications of histones, also called histone code, and nucleosome remodeling. This Tetrahymena thermophila (strain SB210) protein is Histone H2AX (HTA1).